A 284-amino-acid chain; its full sequence is Gap junction beta-1 protein (284 aa).

Topologically, residues 1-22 are cytoplasmic; the sequence is MNWTGLYTLLSGVNRHSTAIGR. Residues 23–45 form a helical membrane-spanning segment; the sequence is VWLSVIFIFRIMVLVVAAESVWG. Over 46 to 75 the chain is Extracellular; it reads DEKSSFICNTLQPGCNSVCYDHFFPISHVR. Residues 76 to 95 traverse the membrane as a helical segment; that stretch reads LWSLQLILVSTPALLVAMHV. The Cytoplasmic segment spans residues 96-130; the sequence is AHQQHIEKKMLRLEGHGDPLHLEEVKRHKVHISGT. The chain crosses the membrane as a helical span at residues 131 to 153; sequence LWWTYVISVVFRLLFEAAFMYVF. At 154-191 the chain is on the extracellular side; that stretch reads YLLYPGYAMVRLVKCDAYPCPNTVDCFVSRPTEKTIFT. Residues 192-214 traverse the membrane as a helical segment; sequence VFMLAASGICIILNVAEVVYLIF. The Cytoplasmic segment spans residues 215 to 284; the sequence is RACARRAQRR…AEKSDRCSAC (70 aa). Residues serine 233, serine 259, serine 267, and serine 278 each carry the phosphoserine modification.

Belongs to the connexin family. Beta-type (group I) subfamily. A connexon is composed of a hexamer of connexins. Interacts with CNST.

The protein resides in the cell membrane. It is found in the cell junction. It localises to the gap junction. One gap junction consists of a cluster of closely packed pairs of transmembrane channels, the connexons, through which materials of low MW diffuse from one cell to a neighboring cell. The protein is Gap junction beta-1 protein (GJB1) of Bos taurus (Bovine).